The sequence spans 1972 residues: Myosin-11 (1972 aa).

Ser8, Ser23, and Ser40 each carry phosphoserine. Positions Ala31 to Pro81 constitute a Myosin N-terminal SH3-like domain. A Myosin motor domain is found at Ser85–Asp783. At Lys129 the chain carries N6,N6,N6-trimethyllysine. Gly178–Thr185 contributes to the ATP binding site. 2 actin-binding regions span residues Leu661–His683 and Arg762–Ala776. The IQ domain occupies Ile786 to Ala815. Positions Leu844 to Thr1934 form a coiled coil. The interval Glu858–His882 is disordered. The residue at position 1177 (Thr1177) is a Phosphothreonine. Residues Ser1684 and Ser1722 each carry the phosphoserine modification. Disordered regions lie at residues Glu1744 to Lys1800 and Glu1866 to Glu1972. Polar residues predominate over residues Ala1762–Gln1788. 2 stretches are compositionally biased toward basic and acidic residues: residues Gln1789–Lys1800 and Glu1866–Asn1876. Positions Ser1935–Glu1972 are C-terminal. Residue Ser1954 is modified to Phosphoserine. Thr1958 is modified (phosphothreonine). Position 1971 is a phosphoserine (Ser1971).

The protein belongs to the TRAFAC class myosin-kinesin ATPase superfamily. Myosin family. As to quaternary structure, muscle myosin is a hexameric protein that consists of 2 heavy chain subunits (MHC), 2 alkali light chain subunits (MLC) and 2 regulatory light chain subunits (MLC-2). In terms of tissue distribution, smooth muscle; expressed in the umbilical artery, bladder, esophagus and trachea. Isoform 1 is mostly found in slowly contracting tonic muscles.

The protein resides in the melanosome. Its function is as follows. Muscle contraction. This Homo sapiens (Human) protein is Myosin-11 (MYH11).